The primary structure comprises 215 residues: 5'-deoxynucleotidase YGK1 (215 aa).

The HD domain occupies 58–164 (ISDHMYRMGL…VKDIDKYEML (107 aa)). The a divalent metal cation site is built by His-61, His-89, Asp-90, Glu-93, Asp-98, Ile-99, and Asp-159.

The protein belongs to the HDDC2 family. As to quaternary structure, homodimer. It depends on Mn(2+) as a cofactor. Co(2+) is required as a cofactor. Requires Mg(2+) as cofactor.

It catalyses the reaction a 2'-deoxyribonucleoside 5'-phosphate + H2O = a 2'-deoxyribonucleoside + phosphate. Functionally, catalyzes the dephosphorylation of the nucleoside 5'-monophosphates deoxyadenosine monophosphate (dAMP), deoxycytidine monophosphate (dCMP), deoxyguanosine monophosphate (dGMP) and deoxythymidine monophosphate (dTMP). The polypeptide is 5'-deoxynucleotidase YGK1 (Saccharomyces cerevisiae (strain ATCC 204508 / S288c) (Baker's yeast)).